Reading from the N-terminus, the 1019-residue chain is UPF0182 protein Krad_1193 (1019 aa).

The next 7 helical transmembrane spans lie at 19–39, 61–81, 115–135, 169–189, 213–233, 264–284, and 291–311; these read GAAL…VVGA, LWLQ…AVAV, RLVV…VAMS, WLAF…IAGL, VHLA…YWLD, AILA…AVGT, and IGTG…PWAV. Disordered stretches follow at residues 897-934 and 977-1019; these read GNSG…ATGD and DAAS…TPTP. Residues 977-1005 show a composition bias toward low complexity; the sequence is DAASAAEARLERSGTSGPTSSSSPSASSA. A compositionally biased stretch (pro residues) spans 1006 to 1019; the sequence is PPVPGETPAATPTP.

This sequence belongs to the UPF0182 family.

The protein localises to the cell membrane. This Kineococcus radiotolerans (strain ATCC BAA-149 / DSM 14245 / SRS30216) protein is UPF0182 protein Krad_1193.